A 321-amino-acid polypeptide reads, in one-letter code: Aspartate carbamoyltransferase catalytic subunit (321 aa).

2 residues coordinate carbamoyl phosphate: arginine 65 and threonine 66. Position 93 (lysine 93) interacts with L-aspartate. The carbamoyl phosphate site is built by arginine 115, histidine 143, and glutamine 146. The L-aspartate site is built by arginine 176 and arginine 230. Carbamoyl phosphate contacts are provided by glycine 271 and proline 272.

Belongs to the aspartate/ornithine carbamoyltransferase superfamily. ATCase family. As to quaternary structure, heterododecamer (2C3:3R2) of six catalytic PyrB chains organized as two trimers (C3), and six regulatory PyrI chains organized as three dimers (R2).

The enzyme catalyses carbamoyl phosphate + L-aspartate = N-carbamoyl-L-aspartate + phosphate + H(+). It functions in the pathway pyrimidine metabolism; UMP biosynthesis via de novo pathway; (S)-dihydroorotate from bicarbonate: step 2/3. In terms of biological role, catalyzes the condensation of carbamoyl phosphate and aspartate to form carbamoyl aspartate and inorganic phosphate, the committed step in the de novo pyrimidine nucleotide biosynthesis pathway. This chain is Aspartate carbamoyltransferase catalytic subunit, found in Bartonella quintana (strain Toulouse) (Rochalimaea quintana).